The chain runs to 506 residues: Arylsulfatase A (506 aa).

The N-terminal stretch at 1 to 17 (MALGTLFLALAAGLSTA) is a signal peptide. Ca(2+) is bound by residues D28, D29, and C68. The active-site Nucleophile is C68. C68 carries the 3-oxoalanine (Cys) modification. K122 contacts substrate. Residue H124 is part of the active site. S149 serves as a coordination point for substrate. Cystine bridges form between C155-C171 and C160-C167. The N-linked (GlcNAc...) asparagine glycan is linked to N157. N183 carries an N-linked (GlcNAc...) asparagine glycan. H228 is a substrate binding site. 2 residues coordinate Ca(2+): D280 and N281. 4 disulfide bridges follow: C299–C413, C487–C499, C488–C501, and C492–C498. A substrate-binding site is contributed by K301. Residue N349 is glycosylated (N-linked (GlcNAc...) asparagine).

It belongs to the sulfatase family. As to quaternary structure, homodimer at neutral pH and homooctamer at acidic pH. Exists both as a single chain of 58 kDa (component A) or as a chain of 50 kDa (component B) linked by disulfide bond(s) to a 7 kDa chain (component C). Interacts with SUMF1. Ca(2+) is required as a cofactor. The conversion to 3-oxoalanine (also known as C-formylglycine, FGly), of a serine or cysteine residue in prokaryotes and of a cysteine residue in eukaryotes, is critical for catalytic activity. This post-translational modification is severely defective in multiple sulfatase deficiency (MSD).

The protein resides in the endoplasmic reticulum. Its subcellular location is the lysosome. The catalysed reaction is an N-acyl-1-beta-D-(3-O-sulfo)-galactosyl-sphing-4-enine + H2O = a beta-D-galactosyl-(1&lt;-&gt;1')-N-acylsphing-4-enine + sulfate + H(+). Functionally, hydrolyzes cerebroside sulfate. The sequence is that of Arylsulfatase A (Arsa) from Mus musculus (Mouse).